Consider the following 328-residue polypeptide: Phosphate acyltransferase (328 aa).

This sequence belongs to the PlsX family. Homodimer. Probably interacts with PlsY.

Its subcellular location is the cytoplasm. The enzyme catalyses a fatty acyl-[ACP] + phosphate = an acyl phosphate + holo-[ACP]. The protein operates within lipid metabolism; phospholipid metabolism. In terms of biological role, catalyzes the reversible formation of acyl-phosphate (acyl-PO(4)) from acyl-[acyl-carrier-protein] (acyl-ACP). This enzyme utilizes acyl-ACP as fatty acyl donor, but not acyl-CoA. This Mycoplasma pneumoniae (strain ATCC 29342 / M129 / Subtype 1) (Mycoplasmoides pneumoniae) protein is Phosphate acyltransferase.